The following is a 439-amino-acid chain: GTPase Obg (439 aa).

The Obg domain occupies 4 to 162 (IEFIDVVDIY…KHIQLELKLL (159 aa)). The OBG-type G domain maps to 163-336 (ADVGLIGYPN…LKYAMWDIIK (174 aa)). Residues 169-176 (GYPNVGKS), 194-198 (FTTLV), 218-221 (DIPG), 288-291 (NKSD), and 317-319 (SAV) each bind GTP. Residues Ser-176 and Thr-196 each coordinate Mg(2+). In terms of domain architecture, OCT spans 361–439 (LVLPDRVDIK…VEGVDFIFKE (79 aa)).

This sequence belongs to the TRAFAC class OBG-HflX-like GTPase superfamily. OBG GTPase family. As to quaternary structure, monomer. The cofactor is Mg(2+).

It localises to the cytoplasm. Its function is as follows. An essential GTPase which binds GTP, GDP and possibly (p)ppGpp with moderate affinity, with high nucleotide exchange rates and a fairly low GTP hydrolysis rate. Plays a role in control of the cell cycle, stress response, ribosome biogenesis and in those bacteria that undergo differentiation, in morphogenesis control. This chain is GTPase Obg, found in Fervidobacterium nodosum (strain ATCC 35602 / DSM 5306 / Rt17-B1).